Reading from the N-terminus, the 515-residue chain is Galactose/methyl galactoside import ATP-binding protein MglA (515 aa).

2 ABC transporter domains span residues 8-243 and 254-499; these read LEMR…VGRE and IPKE…AKYL. Residue 40–47 coordinates ATP; the sequence is GENGAGKS.

This sequence belongs to the ABC transporter superfamily. Galactose/methyl galactoside importer (TC 3.A.1.2.3) family. The complex is composed of one ATP-binding protein (MglA), two transmembrane proteins (MglC) and a solute-binding protein (MglB).

The protein localises to the cell membrane. The enzyme catalyses D-galactose(out) + ATP + H2O = D-galactose(in) + ADP + phosphate + H(+). It catalyses the reaction methyl beta-D-galactoside(out) + ATP + H2O = methyl beta-D-galactoside(in) + ADP + phosphate + H(+). Part of the ABC transporter complex MglABC involved in galactose/methyl galactoside import. Responsible for energy coupling to the transport system. This chain is Galactose/methyl galactoside import ATP-binding protein MglA, found in Clostridium perfringens (strain ATCC 13124 / DSM 756 / JCM 1290 / NCIMB 6125 / NCTC 8237 / Type A).